Consider the following 342-residue polypeptide: Glucokinase (342 aa).

15–20 (GDVGGT) contributes to the ATP binding site.

The protein belongs to the bacterial glucokinase family.

It localises to the cytoplasm. The catalysed reaction is D-glucose + ATP = D-glucose 6-phosphate + ADP + H(+). The polypeptide is Glucokinase (Ralstonia nicotianae (strain ATCC BAA-1114 / GMI1000) (Ralstonia solanacearum)).